Consider the following 733-residue polypeptide: Ferric aerobactin receptor (733 aa).

The first 25 residues, 1–25, serve as a signal peptide directing secretion; the sequence is MMISKKYTLWALNPLLLTMMAPAVA. The TonB box motif lies at 31–38; sequence ETFVVSAN. The TBDR plug domain maps to 43-153; that stretch reads TVAEMAQTTW…TGGLINIVTK (111 aa). The region spanning 158-733 is the TBDR beta-barrel domain; it reads ETIMEFEAGT…TFGLNYSVLF (576 aa). Residues 716–733 carry the TonB C-terminal box motif; it reads YDYKGRGRTFGLNYSVLF.

It belongs to the TonB-dependent receptor family.

The protein resides in the cell outer membrane. Receptor for aerobactin. The protein is Ferric aerobactin receptor (iutA) of Klebsiella pneumoniae.